Here is a 210-residue protein sequence, read N- to C-terminus: Protein-L-isoaspartate O-methyltransferase (210 aa).

Residue Ser-60 is part of the active site.

This sequence belongs to the methyltransferase superfamily. L-isoaspartyl/D-aspartyl protein methyltransferase family.

It localises to the cytoplasm. It catalyses the reaction [protein]-L-isoaspartate + S-adenosyl-L-methionine = [protein]-L-isoaspartate alpha-methyl ester + S-adenosyl-L-homocysteine. Functionally, catalyzes the methyl esterification of L-isoaspartyl residues in peptides and proteins that result from spontaneous decomposition of normal L-aspartyl and L-asparaginyl residues. It plays a role in the repair and/or degradation of damaged proteins. This chain is Protein-L-isoaspartate O-methyltransferase, found in Xylella fastidiosa (strain M12).